Here is a 205-residue protein sequence, read N- to C-terminus: Ribonuclease HII (205 aa).

Residues 16–205 enclose the RNase H type-2 domain; it reads VSEVGIDEVG…KSFLKKSKLI (190 aa). Asp22, Glu23, and Asp118 together coordinate a divalent metal cation.

Belongs to the RNase HII family. Mn(2+) serves as cofactor. It depends on Mg(2+) as a cofactor.

The protein resides in the cytoplasm. It catalyses the reaction Endonucleolytic cleavage to 5'-phosphomonoester.. Its function is as follows. Endonuclease that specifically degrades the RNA of RNA-DNA hybrids. This is Ribonuclease HII from Prochlorococcus marinus (strain AS9601).